A 316-amino-acid polypeptide reads, in one-letter code: Thymidylate synthase (316 aa).

Residues Arg23 and 178-179 (RR) each bind dUMP. Cys198 functions as the Nucleophile in the catalytic mechanism. Residues 218-221 (RSGD), Asn229, and 259-261 (HIY) contribute to the dUMP site. Position 221 (Asp221) interacts with (6R)-5,10-methylene-5,6,7,8-tetrahydrofolate. Residue Ala315 coordinates (6R)-5,10-methylene-5,6,7,8-tetrahydrofolate.

Belongs to the thymidylate synthase family. Bacterial-type ThyA subfamily. As to quaternary structure, homodimer.

Its subcellular location is the cytoplasm. It catalyses the reaction dUMP + (6R)-5,10-methylene-5,6,7,8-tetrahydrofolate = 7,8-dihydrofolate + dTMP. It functions in the pathway pyrimidine metabolism; dTTP biosynthesis. Catalyzes the reductive methylation of 2'-deoxyuridine-5'-monophosphate (dUMP) to 2'-deoxythymidine-5'-monophosphate (dTMP) while utilizing 5,10-methylenetetrahydrofolate (mTHF) as the methyl donor and reductant in the reaction, yielding dihydrofolate (DHF) as a by-product. This enzymatic reaction provides an intracellular de novo source of dTMP, an essential precursor for DNA biosynthesis. The sequence is that of Thymidylate synthase from Lactiplantibacillus plantarum (strain ATCC BAA-793 / NCIMB 8826 / WCFS1) (Lactobacillus plantarum).